A 97-amino-acid chain; its full sequence is Aspartyl/glutamyl-tRNA(Asn/Gln) amidotransferase subunit C (97 aa).

Residues 59–78 are disordered; the sequence is STGKLRPDEPAQPLSRDDAL. Basic and acidic residues predominate over residues 63-78; the sequence is LRPDEPAQPLSRDDAL.

The protein belongs to the GatC family. In terms of assembly, heterotrimer of A, B and C subunits.

The enzyme catalyses L-glutamyl-tRNA(Gln) + L-glutamine + ATP + H2O = L-glutaminyl-tRNA(Gln) + L-glutamate + ADP + phosphate + H(+). It catalyses the reaction L-aspartyl-tRNA(Asn) + L-glutamine + ATP + H2O = L-asparaginyl-tRNA(Asn) + L-glutamate + ADP + phosphate + 2 H(+). In terms of biological role, allows the formation of correctly charged Asn-tRNA(Asn) or Gln-tRNA(Gln) through the transamidation of misacylated Asp-tRNA(Asn) or Glu-tRNA(Gln) in organisms which lack either or both of asparaginyl-tRNA or glutaminyl-tRNA synthetases. The reaction takes place in the presence of glutamine and ATP through an activated phospho-Asp-tRNA(Asn) or phospho-Glu-tRNA(Gln). In Metallosphaera sedula (strain ATCC 51363 / DSM 5348 / JCM 9185 / NBRC 15509 / TH2), this protein is Aspartyl/glutamyl-tRNA(Asn/Gln) amidotransferase subunit C.